Here is a 305-residue protein sequence, read N- to C-terminus: UDP-3-O-acyl-N-acetylglucosamine deacetylase (305 aa).

Zn(2+) contacts are provided by His79, His238, and Asp242. The active-site Proton donor is the His265.

The protein belongs to the LpxC family. Zn(2+) serves as cofactor.

It catalyses the reaction a UDP-3-O-[(3R)-3-hydroxyacyl]-N-acetyl-alpha-D-glucosamine + H2O = a UDP-3-O-[(3R)-3-hydroxyacyl]-alpha-D-glucosamine + acetate. The protein operates within glycolipid biosynthesis; lipid IV(A) biosynthesis; lipid IV(A) from (3R)-3-hydroxytetradecanoyl-[acyl-carrier-protein] and UDP-N-acetyl-alpha-D-glucosamine: step 2/6. Its function is as follows. Catalyzes the hydrolysis of UDP-3-O-myristoyl-N-acetylglucosamine to form UDP-3-O-myristoylglucosamine and acetate, the committed step in lipid A biosynthesis. In Salmonella typhi, this protein is UDP-3-O-acyl-N-acetylglucosamine deacetylase.